The primary structure comprises 245 residues: Carboxy-S-adenosyl-L-methionine synthase (245 aa).

Residues Tyr42, 67-69, 92-93, 120-121, Asn135, and Arg202 each bind S-adenosyl-L-methionine; these read GCS, DN, and DI.

This sequence belongs to the class I-like SAM-binding methyltransferase superfamily. Cx-SAM synthase family. Homodimer.

It carries out the reaction prephenate + S-adenosyl-L-methionine = carboxy-S-adenosyl-L-methionine + 3-phenylpyruvate + H2O. Catalyzes the conversion of S-adenosyl-L-methionine (SAM) to carboxy-S-adenosyl-L-methionine (Cx-SAM). The protein is Carboxy-S-adenosyl-L-methionine synthase of Vibrio vulnificus (strain YJ016).